The sequence spans 227 residues: DNA repair protein RecO (227 aa).

Belongs to the RecO family.

In terms of biological role, involved in DNA repair and RecF pathway recombination. The sequence is that of DNA repair protein RecO from Pseudomonas entomophila (strain L48).